Here is a 495-residue protein sequence, read N- to C-terminus: Protein painting of fourth (495 aa).

Residues 1 to 51 (MDSKRAALESGDGPDAKRLDTTDDQDKEASGGDGSQVMLAKHVAPYTGHGC) form a disordered region. In terms of domain architecture, RRM spans 215–289 (CSLYVGNIPF…RTLTVRYRRL (75 aa)). A compositionally biased stretch (low complexity) spans 332 to 342 (ISDSDNCSDSS). Disordered stretches follow at residues 332-358 (ISDS…INEQ), 432-451 (PVPA…KKAK), and 461-495 (GPFR…DPDP). Residues 345-358 (GKEDGKRKKKINEQ) are compositionally biased toward basic and acidic residues. The Bipartite nuclear localization signal signature appears at 351-367 (RKKKINEQEREIEKLKR). The span at 472 to 495 (TADEYEKDDRLEELYAQLERDPDP) shows a compositional bias: basic and acidic residues.

Interacts with Zeste. Weakly expressed in embryos. Expression increases during larval and pupal stages. In adults, it is predominantly expressed in males, while it is weakly expressed in females.

It is found in the nucleus. It localises to the chromosome. Functionally, probable RNA-binding protein that specifically binds to the fourth chromosome and may bind an RNA that spreads the fourth chromosome. May be a reminiscence of X chromosome dosage compensation of ancestral Drosophila species in which the X and the fourth chromosomes are one single chromosome. The protein is Protein painting of fourth (Pof) of Drosophila melanogaster (Fruit fly).